The sequence spans 85 residues: Teretoxin Tan9.6 (85 aa).

A signal peptide spans 1–21; that stretch reads MMSKTGALLLTFMILVLFSMA. A propeptide spanning residues 22 to 52 is cleaved from the precursor; the sequence is AADALGERFEDHEQKIREQDAGVGLLSLMGR.

In terms of processing, contains 3 disulfide bonds. As to expression, expressed by the venom duct.

The protein localises to the secreted. The polypeptide is Teretoxin Tan9.6 (Terebra anilis (Auger snail)).